We begin with the raw amino-acid sequence, 159 residues long: Ribosomal RNA large subunit methyltransferase H (159 aa).

Positions 76 and 108 each coordinate S-adenosyl-L-methionine.

It belongs to the RNA methyltransferase RlmH family. Homodimer.

It localises to the cytoplasm. The catalysed reaction is pseudouridine(1915) in 23S rRNA + S-adenosyl-L-methionine = N(3)-methylpseudouridine(1915) in 23S rRNA + S-adenosyl-L-homocysteine + H(+). In terms of biological role, specifically methylates the pseudouridine at position 1915 (m3Psi1915) in 23S rRNA. In Limosilactobacillus reuteri (strain DSM 20016) (Lactobacillus reuteri), this protein is Ribosomal RNA large subunit methyltransferase H.